Here is a 298-residue protein sequence, read N- to C-terminus: Probable endonuclease 4 (298 aa).

Residues histidine 69, histidine 111, glutamate 146, aspartate 180, histidine 183, histidine 215, aspartate 228, histidine 230, and glutamate 260 each contribute to the Zn(2+) site.

It belongs to the AP endonuclease 2 family. The cofactor is Zn(2+).

It carries out the reaction Endonucleolytic cleavage to 5'-phosphooligonucleotide end-products.. Functionally, endonuclease IV plays a role in DNA repair. It cleaves phosphodiester bonds at apurinic or apyrimidinic (AP) sites, generating a 3'-hydroxyl group and a 5'-terminal sugar phosphate. This Bacillus cereus (strain AH820) protein is Probable endonuclease 4.